Consider the following 76-residue polypeptide: Small ribosomal subunit protein bS18 (76 aa).

This sequence belongs to the bacterial ribosomal protein bS18 family. In terms of assembly, part of the 30S ribosomal subunit. Forms a tight heterodimer with protein bS6.

Functionally, binds as a heterodimer with protein bS6 to the central domain of the 16S rRNA, where it helps stabilize the platform of the 30S subunit. The chain is Small ribosomal subunit protein bS18 from Azotobacter vinelandii (strain DJ / ATCC BAA-1303).